The chain runs to 220 residues: Large ribosomal subunit protein uL3 (220 aa).

Positions Ser132–Gln153 are disordered. Residues Gly133–Val145 are compositionally biased toward polar residues. Gln153 is modified (N5-methylglutamine).

The protein belongs to the universal ribosomal protein uL3 family. As to quaternary structure, part of the 50S ribosomal subunit. Forms a cluster with proteins L14 and L19. Post-translationally, methylated by PrmB.

Its function is as follows. One of the primary rRNA binding proteins, it binds directly near the 3'-end of the 23S rRNA, where it nucleates assembly of the 50S subunit. The protein is Large ribosomal subunit protein uL3 of Ralstonia nicotianae (strain ATCC BAA-1114 / GMI1000) (Ralstonia solanacearum).